A 658-amino-acid polypeptide reads, in one-letter code: Heat shock protein homolog SSE1 (658 aa).

A compositionally biased stretch (basic and acidic residues) spans 614–627 (KRKEEERKSKKENA). Residues 614-658 (KRKEEERKSKKENAQEGTSSKPESKEESEAKEDNDEESDVASIDE) are disordered. The segment covering 642–658 (EAKEDNDEESDVASIDE) has biased composition (acidic residues).

Belongs to the heat shock protein 70 family.

The protein resides in the cytoplasm. Functionally, required for normal growth at various temperatures. This is Heat shock protein homolog SSE1 (SSE1) from Encephalitozoon cuniculi (strain GB-M1) (Microsporidian parasite).